A 216-amino-acid chain; its full sequence is 3-isopropylmalate dehydratase small subunit (216 aa).

Belongs to the LeuD family. LeuD type 1 subfamily. As to quaternary structure, heterodimer of LeuC and LeuD.

The enzyme catalyses (2R,3S)-3-isopropylmalate = (2S)-2-isopropylmalate. Its pathway is amino-acid biosynthesis; L-leucine biosynthesis; L-leucine from 3-methyl-2-oxobutanoate: step 2/4. Its function is as follows. Catalyzes the isomerization between 2-isopropylmalate and 3-isopropylmalate, via the formation of 2-isopropylmaleate. In Polaromonas sp. (strain JS666 / ATCC BAA-500), this protein is 3-isopropylmalate dehydratase small subunit.